Reading from the N-terminus, the 274-residue chain is Undecaprenyl-diphosphatase 1 (274 aa).

A run of 7 helical transmembrane segments spans residues 8–28 (WLLI…PIPV), 45–65 (IEGL…VIAI), 92–112 (FRIS…ALLF), 120–140 (LKQL…LWLI), 195–215 (FSFF…ISDI), 230–250 (IAFI…MNIM), and 253–273 (GKLI…LSLL).

It belongs to the UppP family.

It is found in the cell membrane. It catalyses the reaction di-trans,octa-cis-undecaprenyl diphosphate + H2O = di-trans,octa-cis-undecaprenyl phosphate + phosphate + H(+). In terms of biological role, catalyzes the dephosphorylation of undecaprenyl diphosphate (UPP). Confers resistance to bacitracin. This chain is Undecaprenyl-diphosphatase 1, found in Halalkalibacterium halodurans (strain ATCC BAA-125 / DSM 18197 / FERM 7344 / JCM 9153 / C-125) (Bacillus halodurans).